Here is a 442-residue protein sequence, read N- to C-terminus: Histidine--tRNA ligase (442 aa).

It belongs to the class-II aminoacyl-tRNA synthetase family. As to quaternary structure, homodimer.

It localises to the cytoplasm. The catalysed reaction is tRNA(His) + L-histidine + ATP = L-histidyl-tRNA(His) + AMP + diphosphate + H(+). The protein is Histidine--tRNA ligase of Wolinella succinogenes (strain ATCC 29543 / DSM 1740 / CCUG 13145 / JCM 31913 / LMG 7466 / NCTC 11488 / FDC 602W) (Vibrio succinogenes).